The primary structure comprises 77 residues: Large ribosomal subunit protein bL28 (77 aa).

Positions 1–25 (MARVCQVTGKAPMSGNNVSHANNKT) are disordered.

This sequence belongs to the bacterial ribosomal protein bL28 family.

The protein is Large ribosomal subunit protein bL28 of Paraburkholderia phymatum (strain DSM 17167 / CIP 108236 / LMG 21445 / STM815) (Burkholderia phymatum).